Here is a 220-residue protein sequence, read N- to C-terminus: UPF0319 protein YccT (220 aa).

The signal sequence occupies residues 1 to 20; sequence MKTGIVTTLIALCLPVSVFA.

The protein belongs to the UPF0319 family.

This is UPF0319 protein YccT from Escherichia coli (strain 55989 / EAEC).